Here is a 300-residue protein sequence, read N- to C-terminus: Large ribosomal subunit protein uL18 (300 aa).

Residues 246-267 show a composition bias toward basic and acidic residues; that stretch reads NIRSDPKRDRKPKKDVSKEPKR. Positions 246 to 276 are disordered; the sequence is NIRSDPKRDRKPKKDVSKEPKRWNAKKLTNA.

The protein belongs to the universal ribosomal protein uL18 family. In terms of assembly, component of the large ribosomal subunit (LSU).

The protein resides in the cytoplasm. It localises to the nucleus. Component of the ribosome, a large ribonucleoprotein complex responsible for the synthesis of proteins in the cell. The small ribosomal subunit (SSU) binds messenger RNAs (mRNAs) and translates the encoded message by selecting cognate aminoacyl-transfer RNA (tRNA) molecules. The large subunit (LSU) contains the ribosomal catalytic site termed the peptidyl transferase center (PTC), which catalyzes the formation of peptide bonds, thereby polymerizing the amino acids delivered by tRNAs into a polypeptide chain. The nascent polypeptides leave the ribosome through a tunnel in the LSU and interact with protein factors that function in enzymatic processing, targeting, and the membrane insertion of nascent chains at the exit of the ribosomal tunnel. The sequence is that of Large ribosomal subunit protein uL18 (RpL5) from Toxoptera citricida (Brown citrus aphid).